A 276-amino-acid chain; its full sequence is Undecaprenyl-diphosphatase 1 (276 aa).

The next 8 membrane-spanning stretches (helical) occupy residues 1–21 (MSLW…LFPV), 44–64 (QLLP…LWYF), 87–107 (GHLM…GLLL), 114–134 (VFHD…LLWL), 150–170 (LTFK…IPGF), 190–210 (AAEF…LLEL), 222–242 (DALL…RFLM), and 251–271 (LASF…WFMF).

The protein belongs to the UppP family.

Its subcellular location is the cell inner membrane. It catalyses the reaction di-trans,octa-cis-undecaprenyl diphosphate + H2O = di-trans,octa-cis-undecaprenyl phosphate + phosphate + H(+). Its function is as follows. Catalyzes the dephosphorylation of undecaprenyl diphosphate (UPP). Confers resistance to bacitracin. This chain is Undecaprenyl-diphosphatase 1, found in Burkholderia pseudomallei (strain 1106a).